The chain runs to 35 residues: Small toxic polypeptide LdrD (35 aa).

A helical transmembrane segment spans residues 10–32; that stretch reads FWHDLAAPVIAGILASMIVNWLN.

This sequence belongs to the Ldr toxic peptide family.

The protein localises to the cell inner membrane. In terms of biological role, toxic component of a type I toxin-antitoxin (TA) system. Overexpression causes rapid cell killing and nucleoid condensation of the host cell. Overexpression induces stress-response and a number of membrane protein genes. May inhibit ATP synthesis due to its insertion in the cell inner membrane. In Escherichia coli (strain K12), this protein is Small toxic polypeptide LdrD (ldrD).